The primary structure comprises 205 residues: MKQASPRAGGAKARRGQVARKTKETDVSVELRLEPGESSIATGLPFFDHMLDQIARHGGLTLSVQAKGDLQVDAHHTVEDVGIGLGEALRQATADKAGLARYGVAVVPLDEALVEAVVDLSGRPHLTFNAKLPSGKRFIGAYDVDLTQDFLQAFVNHARICLHVNVRYGRNLHHVVEAIFKATARALRAATAREGTALPSTKGLL.

The segment at 1–27 is disordered; the sequence is MKQASPRAGGAKARRGQVARKTKETDV.

The protein belongs to the imidazoleglycerol-phosphate dehydratase family.

The protein resides in the cytoplasm. The enzyme catalyses D-erythro-1-(imidazol-4-yl)glycerol 3-phosphate = 3-(imidazol-4-yl)-2-oxopropyl phosphate + H2O. It functions in the pathway amino-acid biosynthesis; L-histidine biosynthesis; L-histidine from 5-phospho-alpha-D-ribose 1-diphosphate: step 6/9. This chain is Imidazoleglycerol-phosphate dehydratase, found in Anaeromyxobacter sp. (strain Fw109-5).